A 270-amino-acid chain; its full sequence is tRNA pseudouridine synthase A (270 aa).

Catalysis depends on D52, which acts as the Nucleophile. Y110 serves as a coordination point for substrate.

It belongs to the tRNA pseudouridine synthase TruA family. Homodimer.

It catalyses the reaction uridine(38/39/40) in tRNA = pseudouridine(38/39/40) in tRNA. Its function is as follows. Formation of pseudouridine at positions 38, 39 and 40 in the anticodon stem and loop of transfer RNAs. This chain is tRNA pseudouridine synthase A, found in Paraburkholderia phytofirmans (strain DSM 17436 / LMG 22146 / PsJN) (Burkholderia phytofirmans).